Consider the following 325-residue polypeptide: GMP reductase (325 aa).

Residue Cys174 is the Thioimidate intermediate of the active site. Residue 203–226 participates in NADP(+) binding; that stretch reads LIADGGIRTHGDIAKSIRFGASMV.

The protein belongs to the IMPDH/GMPR family. GuaC type 2 subfamily.

It catalyses the reaction IMP + NH4(+) + NADP(+) = GMP + NADPH + 2 H(+). Functionally, catalyzes the irreversible NADPH-dependent deamination of GMP to IMP. It functions in the conversion of nucleobase, nucleoside and nucleotide derivatives of G to A nucleotides, and in maintaining the intracellular balance of A and G nucleotides. The polypeptide is GMP reductase (Staphylococcus aureus (strain MRSA252)).